The sequence spans 82 residues: RNA-binding protein Hfq (82 aa).

A Sm domain is found at 11-71 (DTFLNHVRKT…ISTIMPGAPI (61 aa)).

This sequence belongs to the Hfq family. As to quaternary structure, homohexamer.

RNA chaperone that binds small regulatory RNA (sRNAs) and mRNAs to facilitate mRNA translational regulation in response to envelope stress, environmental stress and changes in metabolite concentrations. Also binds with high specificity to tRNAs. The protein is RNA-binding protein Hfq of Nitrobacter winogradskyi (strain ATCC 25391 / DSM 10237 / CIP 104748 / NCIMB 11846 / Nb-255).